The chain runs to 251 residues: Chloride intracellular channel protein 5 (251 aa).

The segment at 1-98 is required for insertion into the membrane; that stretch reads MTDSATANGD…EEFLEETLTP (98 aa). The G-site signature appears at 32 to 35; it reads CPFS. Residues 34-54 form a helical membrane-spanning segment; that stretch reads FSQRLFMILWLKGVVFNVTTV. One can recognise a GST C-terminal domain in the interval 101-241; it reads YPKLAARHRE…AADSEIELAY (141 aa).

Belongs to the chloride channel CLIC family. As to quaternary structure, component of a multimeric complex consisting of several cytoskeletal proteins, including actin, ezrin, alpha-actinin, gelsolin, and IQGAP1. Interacts with AKAP9. Interacts with TPRN. TPRN, CLIC5 and PTPQR form concentric rings at the base of stereocilia and may form a complex. Interacts with EZR, MYO6 and RDX; the proteins may work together as a complex to stabilize linkages between the plasma membrane and subjacent actin cytoskeleton at the stereocilium base. In terms of tissue distribution, detected in cochlea, in cochlear and vestibular hair cell bundles in the organ of Corti (at protein level). Expressed neonatal and adult cardiomyocytes (at protein level).

Its subcellular location is the golgi apparatus. The protein localises to the cytoplasm. It localises to the cytoskeleton. The protein resides in the microtubule organizing center. It is found in the centrosome. Its subcellular location is the cell cortex. The protein localises to the membrane. It localises to the apical cell membrane. The protein resides in the mitochondrion. It is found in the cell projection. Its subcellular location is the stereocilium. The enzyme catalyses Na(+)(in) = Na(+)(out). It catalyses the reaction K(+)(in) = K(+)(out). It carries out the reaction chloride(in) = chloride(out). With respect to regulation, inhibited by F-actin. In terms of biological role, in the soluble state, catalyzes glutaredoxin-like thiol disulfide exchange reactions with reduced glutathione as electron donor. Can insert into membranes and form non-selective ion channels almost equally permeable to Na(+), K(+) and Cl(-). Required for normal hearing. It is necessary for the formation of stereocilia in the inner ear and normal development of the organ of Corti. May play a role in the regulation of transepithelial ion absorption and secretion. Is required for the development and/or maintenance of the proper glomerular endothelial cell and podocyte architecture. Plays a role in formation of the lens suture in the eye, which is important for normal optical properties of the lens. The sequence is that of Chloride intracellular channel protein 5 (Clic5) from Rattus norvegicus (Rat).